A 306-amino-acid polypeptide reads, in one-letter code: Pantothenate kinase (306 aa).

Position 90-97 (90-97 (GSVAVGKS)) interacts with ATP.

Belongs to the prokaryotic pantothenate kinase family.

It localises to the cytoplasm. The catalysed reaction is (R)-pantothenate + ATP = (R)-4'-phosphopantothenate + ADP + H(+). Its pathway is cofactor biosynthesis; coenzyme A biosynthesis; CoA from (R)-pantothenate: step 1/5. The sequence is that of Pantothenate kinase (coaA) from Listeria innocua serovar 6a (strain ATCC BAA-680 / CLIP 11262).